The sequence spans 314 residues: Chlorinase cctP2 (314 aa).

Residues 1–14 show a composition bias toward basic and acidic residues; it reads MEGKTSRYQDEAHD. A disordered region spans residues 1-24; it reads MEGKTSRYQDEAHDSAGSFNEETE. Short sequence motifs (HXXHC) lie at residues 150 to 154 and 177 to 181; these read HALHC and HIEHC.

This sequence belongs to the ustYa family.

It participates in mycotoxin biosynthesis. Chlorinase; part of the gene cluster that mediates the biosynthesis of the mycotoxin cyclochlorotine, a hepatotoxic and carcinogenic cyclic chlorinated pentapeptide. Within the pathway, cctP2 catalyzes the formation of isocyclochlorotine via dichlorination of the Pro from the isocyclotine skeleton. The NRPS cctN initially catalyzes the condensation of L-serine (Ser), Pro, L-2-aminobutyrate (2Abu), Ser, and beta-Phe in this order to produce isocyclotine. After the dichlorination of Pro2 catalyzed by cctP2 to produce isocyclochlorotine, the cctO-mediated transacylation of isocyclochlorotine can furnish cyclochlorotine. The subsequent hydroxylation of cyclochlorotine by cctR yields hydroxycyclochlorotine as the final product. CctP1 probably acts as a phenylalanine aminomutase and provides the uncommon building block beta-Phe. Furthermore, 2Abu can be synthesized from threonine by one of the threonine dehydratases and transaminases localized outside of the cluster. The functions of the remaining proteins encoded by the cluster, cctM and cctT, have not been identified yet. The chain is Chlorinase cctP2 from Talaromyces islandicus (Penicillium islandicum).